Here is a 1270-residue protein sequence, read N- to C-terminus: DNA-directed RNA polymerase subunit beta (1270 aa).

The protein belongs to the RNA polymerase beta chain family. As to quaternary structure, the RNAP catalytic core consists of 2 alpha, 1 beta, 1 beta' and 1 omega subunit. When a sigma factor is associated with the core the holoenzyme is formed, which can initiate transcription.

The enzyme catalyses RNA(n) + a ribonucleoside 5'-triphosphate = RNA(n+1) + diphosphate. DNA-dependent RNA polymerase catalyzes the transcription of DNA into RNA using the four ribonucleoside triphosphates as substrates. This Phocaeicola vulgatus (strain ATCC 8482 / DSM 1447 / JCM 5826 / CCUG 4940 / NBRC 14291 / NCTC 11154) (Bacteroides vulgatus) protein is DNA-directed RNA polymerase subunit beta.